Reading from the N-terminus, the 184-residue chain is Putative axial regulator YABBY 2 (184 aa).

A C4-type zinc finger spans residues 15 to 42; the sequence is CSFCTTILAVSVPYASLFTLVTVRCGHC. Polar residues-rich tracts occupy residues 76 to 94 and 171 to 184; these read LVTRKDCASSSRSTNNLSE and LDQSVAGQKSNGYY. Disordered regions lie at residues 76–115 and 162–184; these read LVTRKDCASSSRSTNNLSENIDREAPRMPPIRPPEKRQRV and LDGNKKGKQLDQSVAGQKSNGYY.

Belongs to the YABBY family. Interacts with SPL/NZZ and SPEAR2. In terms of tissue distribution, expressed at low levels in abaxial regions of lateral aerial organ primordia leading to cotyledons, leaves, flower meristems, sepals, petals, stamen and carpels, but not in roots.

It localises to the nucleus. Functionally, involved in the abaxial cell fate determination during embryogenesis and organogenesis. This is Putative axial regulator YABBY 2 (YAB2) from Arabidopsis thaliana (Mouse-ear cress).